The following is a 211-amino-acid chain: MATFSLTSTLPSSSPTTSLHSIPKPKLKPSTINFTHNLNPFNPNLKPSRHHYLSNYGPYVKAIALDFSGSFFEGGFGGLDEDPPSTPPAGLAVEEKPEPQCPPGLRQYETMAVLRPDMTEDERLTLTQKYEELLVAGGAMYVEVFNRGVIPLAYSIKRKNKAGETNNYLDGIYLLFTYFTKPESISPLEAALVTDDDVIRSSSFKIRKRKY.

A compositionally biased stretch (low complexity) spans 1 to 19 (MATFSLTSTLPSSSPTTSL). Disordered stretches follow at residues 1–25 (MATF…IPKP) and 80–100 (DEDP…PEPQ). Residues 1–65 (MATFSLTSTL…YGPYVKAIAL (65 aa)) constitute a chloroplast transit peptide.

This sequence belongs to the bacterial ribosomal protein bS6 family. In terms of assembly, component of the chloroplast small ribosomal subunit (SSU). Mature 70S chloroplast ribosomes of higher plants consist of a small (30S) and a large (50S) subunit. The 30S small subunit contains 1 molecule of ribosomal RNA (16S rRNA) and 24 different proteins. The 50S large subunit contains 3 rRNA molecules (23S, 5S and 4.5S rRNA) and 33 different proteins.

It localises to the plastid. Its subcellular location is the chloroplast. Component of the chloroplast ribosome (chloro-ribosome), a dedicated translation machinery responsible for the synthesis of chloroplast genome-encoded proteins, including proteins of the transcription and translation machinery and components of the photosynthetic apparatus. The sequence is that of Small ribosomal subunit protein bS6c alpha (RPS6) from Spinacia oleracea (Spinach).